A 193-amino-acid polypeptide reads, in one-letter code: Cyanate hydratase (193 aa).

Catalysis depends on residues arginine 121, glutamate 124, and serine 147.

It belongs to the cyanase family.

It catalyses the reaction cyanate + hydrogencarbonate + 3 H(+) = NH4(+) + 2 CO2. Its function is as follows. Catalyzes the reaction of cyanate with bicarbonate to produce ammonia and carbon dioxide. The protein is Cyanate hydratase of Phaeodactylum tricornutum (strain CCAP 1055/1).